The sequence spans 143 residues: Transcriptional regulator MraZ (143 aa).

SpoVT-AbrB domains are found at residues 5–47 (TYTP…PRAE) and 76–119 (TDEQ…DAQA).

This sequence belongs to the MraZ family. In terms of assembly, forms oligomers.

It localises to the cytoplasm. It is found in the nucleoid. The sequence is that of Transcriptional regulator MraZ from Mycobacterium avium (strain 104).